Reading from the N-terminus, the 352-residue chain is DNA polymerase IV (352 aa).

A UmuC domain is found at 4-185 (IIHVDMDCFF…LPLSKIPGVG (182 aa)). 2 residues coordinate Mg(2+): D8 and D103. E104 is an active-site residue.

Belongs to the DNA polymerase type-Y family. Monomer. It depends on Mg(2+) as a cofactor.

The protein localises to the cytoplasm. The catalysed reaction is DNA(n) + a 2'-deoxyribonucleoside 5'-triphosphate = DNA(n+1) + diphosphate. In terms of biological role, poorly processive, error-prone DNA polymerase involved in untargeted mutagenesis. Copies undamaged DNA at stalled replication forks, which arise in vivo from mismatched or misaligned primer ends. These misaligned primers can be extended by PolIV. Exhibits no 3'-5' exonuclease (proofreading) activity. May be involved in translesional synthesis, in conjunction with the beta clamp from PolIII. This is DNA polymerase IV from Enterobacter sp. (strain 638).